Consider the following 241-residue polypeptide: Biosynthetic peptidoglycan transglycosylase (241 aa).

The helical transmembrane segment at 18-38 threads the bilayer; it reads GVIGIIALWMAGILIFAFLPV.

The protein belongs to the glycosyltransferase 51 family.

The protein resides in the cell inner membrane. The catalysed reaction is [GlcNAc-(1-&gt;4)-Mur2Ac(oyl-L-Ala-gamma-D-Glu-L-Lys-D-Ala-D-Ala)](n)-di-trans,octa-cis-undecaprenyl diphosphate + beta-D-GlcNAc-(1-&gt;4)-Mur2Ac(oyl-L-Ala-gamma-D-Glu-L-Lys-D-Ala-D-Ala)-di-trans,octa-cis-undecaprenyl diphosphate = [GlcNAc-(1-&gt;4)-Mur2Ac(oyl-L-Ala-gamma-D-Glu-L-Lys-D-Ala-D-Ala)](n+1)-di-trans,octa-cis-undecaprenyl diphosphate + di-trans,octa-cis-undecaprenyl diphosphate + H(+). It participates in cell wall biogenesis; peptidoglycan biosynthesis. Functionally, peptidoglycan polymerase that catalyzes glycan chain elongation from lipid-linked precursors. This chain is Biosynthetic peptidoglycan transglycosylase, found in Yersinia pestis bv. Antiqua (strain Antiqua).